A 351-amino-acid polypeptide reads, in one-letter code: UDP-N-acetylenolpyruvoylglucosamine reductase (351 aa).

The FAD-binding PCMH-type domain occupies glycine 11–isoleucine 213. Arginine 158 is a catalytic residue. The Proton donor role is filled by serine 239. The active site involves glutamate 343.

It belongs to the MurB family. FAD serves as cofactor.

It localises to the cytoplasm. The catalysed reaction is UDP-N-acetyl-alpha-D-muramate + NADP(+) = UDP-N-acetyl-3-O-(1-carboxyvinyl)-alpha-D-glucosamine + NADPH + H(+). Its pathway is cell wall biogenesis; peptidoglycan biosynthesis. In terms of biological role, cell wall formation. This Tropheryma whipplei (strain TW08/27) (Whipple's bacillus) protein is UDP-N-acetylenolpyruvoylglucosamine reductase.